Reading from the N-terminus, the 159-residue chain is Putative 4-hydroxy-4-methyl-2-oxoglutarate aldolase (159 aa).

Substrate contacts are provided by residues 78–81 (GDVI) and arginine 100. Position 101 (aspartate 101) interacts with a divalent metal cation.

It belongs to the class II aldolase/RraA-like family. In terms of assembly, homotrimer. A divalent metal cation is required as a cofactor.

It carries out the reaction 4-hydroxy-4-methyl-2-oxoglutarate = 2 pyruvate. The catalysed reaction is oxaloacetate + H(+) = pyruvate + CO2. Functionally, catalyzes the aldol cleavage of 4-hydroxy-4-methyl-2-oxoglutarate (HMG) into 2 molecules of pyruvate. Also contains a secondary oxaloacetate (OAA) decarboxylase activity due to the common pyruvate enolate transition state formed following C-C bond cleavage in the retro-aldol and decarboxylation reactions. The polypeptide is Putative 4-hydroxy-4-methyl-2-oxoglutarate aldolase (Mycobacterium sp. (strain JLS)).